Reading from the N-terminus, the 474-residue chain is Neuronal acetylcholine receptor subunit eat-2 (474 aa).

The signal sequence occupies residues 1 to 21 (MTLKIAFFTLILLVSIERVYS). Topologically, residues 22–237 (SDEEYRLLKD…MHLKRRTMYY (216 aa)) are extracellular. A glycan (N-linked (GlcNAc...) asparagine) is linked at N95. Residues C149 and C163 are joined by a disulfide bond. A run of 3 helical transmembrane segments spans residues 238-258 (GLNWIVPSILISLSNILGFTM), 266-286 (ITLQITNFLSVMVFLAMVSEV), and 303-323 (LSIVILGLSICASLIIVNIFF). Residues 324-440 (RHPKTHRMGD…WRFMAMVIDR (117 aa)) are Cytoplasmic-facing. The segment at 359-378 (PRREEEKNDEEAGGDGTKLL) is disordered. A helical membrane pass occupies residues 441–461 (LSLFLFTGLIFGTTALIFAFC).

The protein belongs to the ligand-gated ion channel (TC 1.A.9) family. Acetylcholine receptor (TC 1.A.9.1) subfamily. As to quaternary structure, neuronal AChR seems to be composed of two different type of subunits: alpha and beta. Expressed in pharyngeal muscle.

It is found in the postsynaptic cell membrane. The protein resides in the cell membrane. After binding acetylcholine, the AChR responds by an extensive change in conformation that affects all subunits and leads to opening of an ion-conducting channel across the plasma membrane. Nicotinic acetylcholine receptor in the MC pharyngeal motor neuron involved in pharyngeal pumping. Has a role in the determination of life span possibly via calorific restriction which affects growth rate, although this is independent of metabolic activity. Plays a role in the defense against the accumulation of ingested live pathogenic bacteria in the intestine. This is Neuronal acetylcholine receptor subunit eat-2 from Caenorhabditis elegans.